A 92-amino-acid polypeptide reads, in one-letter code: Small ribosomal subunit protein uS19 (92 aa).

The protein belongs to the universal ribosomal protein uS19 family.

Functionally, protein S19 forms a complex with S13 that binds strongly to the 16S ribosomal RNA. This chain is Small ribosomal subunit protein uS19, found in Thermosynechococcus vestitus (strain NIES-2133 / IAM M-273 / BP-1).